The following is a 321-amino-acid chain: Cytochrome f (321 aa).

Positions 1-38 (MINLFLLKYKTAFSTFLKPFAYLSLILSVCFYSIQAQA) are cleaved as a signal peptide. Residues Phe-39, Cys-59, Cys-62, and His-63 each coordinate heme. A helical transmembrane segment spans residues 287 to 306 (VKGLIAFFFTVILAQILLVL).

Belongs to the cytochrome f family. The 4 large subunits of the cytochrome b6-f complex are cytochrome b6, subunit IV (17 kDa polypeptide, petD), cytochrome f and the Rieske protein, while the 4 small subunits are PetG, PetL, PetM and PetN. The complex functions as a dimer. Requires heme as cofactor.

Its subcellular location is the plastid. The protein localises to the chloroplast thylakoid membrane. In terms of biological role, component of the cytochrome b6-f complex, which mediates electron transfer between photosystem II (PSII) and photosystem I (PSI), cyclic electron flow around PSI, and state transitions. In Guillardia theta (Cryptophyte), this protein is Cytochrome f (petA).